We begin with the raw amino-acid sequence, 327 residues long: DNA-directed RNA polymerase subunit alpha (327 aa).

The segment at 1–233 is alpha N-terminal domain (alpha-NTD); the sequence is MVREKVKVST…NLFIPFLHVE (233 aa). An alpha C-terminal domain (alpha-CTD) region spans residues 267–327; that stretch reads LAFQYIFIDQ…KKILDILEKK (61 aa).

It belongs to the RNA polymerase alpha chain family. In terms of assembly, in plastids the minimal PEP RNA polymerase catalytic core is composed of four subunits: alpha, beta, beta', and beta''. When a (nuclear-encoded) sigma factor is associated with the core the holoenzyme is formed, which can initiate transcription.

Its subcellular location is the plastid. It localises to the chloroplast. It carries out the reaction RNA(n) + a ribonucleoside 5'-triphosphate = RNA(n+1) + diphosphate. In terms of biological role, DNA-dependent RNA polymerase catalyzes the transcription of DNA into RNA using the four ribonucleoside triphosphates as substrates. The protein is DNA-directed RNA polymerase subunit alpha of Nasturtium officinale (Watercress).